The sequence spans 133 residues: Fatty acid-binding protein, heart (133 aa).

Val2 carries the post-translational modification N-acetylvaline. A Phosphothreonine modification is found at Thr8. At Tyr20 the chain carries Phosphotyrosine; by Tyr-kinases. Ser23 carries the phosphoserine modification. At Thr30 the chain carries Phosphothreonine. Residue Ser83 is modified to Phosphoserine. Arg127 to Tyr129 contacts (9Z)-octadecenoate. Arg127–Tyr129 is a hexadecanoate binding site. Arg127–Tyr129 is a binding site for octadecanoate.

Belongs to the calycin superfamily. Fatty-acid binding protein (FABP) family.

It is found in the cytoplasm. FABPs are thought to play a role in the intracellular transport of long-chain fatty acids and their acyl-CoA esters. The protein is Fatty acid-binding protein, heart (FABP3) of Homo sapiens (Human).